Here is a 246-residue protein sequence, read N- to C-terminus: Small ribosomal subunit protein uS2 (246 aa).

This sequence belongs to the universal ribosomal protein uS2 family.

This chain is Small ribosomal subunit protein uS2, found in Burkholderia cenocepacia (strain ATCC BAA-245 / DSM 16553 / LMG 16656 / NCTC 13227 / J2315 / CF5610) (Burkholderia cepacia (strain J2315)).